Here is a 274-residue protein sequence, read N- to C-terminus: 2,3,4,5-tetrahydropyridine-2,6-dicarboxylate N-succinyltransferase (274 aa).

Positions 104 and 141 each coordinate substrate.

The protein belongs to the transferase hexapeptide repeat family. In terms of assembly, homotrimer.

The protein resides in the cytoplasm. The enzyme catalyses (S)-2,3,4,5-tetrahydrodipicolinate + succinyl-CoA + H2O = (S)-2-succinylamino-6-oxoheptanedioate + CoA. It participates in amino-acid biosynthesis; L-lysine biosynthesis via DAP pathway; LL-2,6-diaminopimelate from (S)-tetrahydrodipicolinate (succinylase route): step 1/3. The chain is 2,3,4,5-tetrahydropyridine-2,6-dicarboxylate N-succinyltransferase from Shewanella denitrificans (strain OS217 / ATCC BAA-1090 / DSM 15013).